A 458-amino-acid chain; its full sequence is UDP-N-acetylmuramoylalanine--D-glutamate ligase (458 aa).

An ATP-binding site is contributed by 124 to 130 (GSDGKTT).

Belongs to the MurCDEF family.

It localises to the cytoplasm. It catalyses the reaction UDP-N-acetyl-alpha-D-muramoyl-L-alanine + D-glutamate + ATP = UDP-N-acetyl-alpha-D-muramoyl-L-alanyl-D-glutamate + ADP + phosphate + H(+). It functions in the pathway cell wall biogenesis; peptidoglycan biosynthesis. Cell wall formation. Catalyzes the addition of glutamate to the nucleotide precursor UDP-N-acetylmuramoyl-L-alanine (UMA). The polypeptide is UDP-N-acetylmuramoylalanine--D-glutamate ligase (Clostridium botulinum (strain Okra / Type B1)).